We begin with the raw amino-acid sequence, 343 residues long: UPF0283 membrane protein blr7254 (343 aa).

The next 3 helical transmembrane spans lie at 64 to 84 (GALFWSGLAGLTLLGVGLGVV), 97 to 117 (LGFVGLAFAFVTALALAVVIG), and 214 to 234 (IVTAVSPRAAIDVMFVFVAAL).

Belongs to the UPF0283 family.

It is found in the cell inner membrane. This chain is UPF0283 membrane protein blr7254, found in Bradyrhizobium diazoefficiens (strain JCM 10833 / BCRC 13528 / IAM 13628 / NBRC 14792 / USDA 110).